We begin with the raw amino-acid sequence, 189 residues long: uncharacterized protein (189 aa).

The protein belongs to the inositol monophosphatase superfamily.

This is an uncharacterized protein from Leptospira biflexa.